The sequence spans 854 residues: Nucleolar MIF4G domain-containing protein 1 homolog (854 aa).

Disordered regions lie at residues 1–38 (MAKIKKKEAKAKPLTRKEQRKQKSEFKKQNKRLYFAGK), 55–105 (QSQL…DAEV), 120–161 (PLGK…KQRI), and 217–306 (RKWE…RDAE). Basic and acidic residues predominate over residues 15–28 (TRKEQRKQKSEFKK). The segment covering 60 to 71 (KNKKKKRSKKPK) has biased composition (basic residues). A compositionally biased stretch (acidic residues) spans 88 to 105 (IDSDDDESIDSDFSDAEV). Basic and acidic residues-rich tracts occupy residues 135-156 (RQDEEAVRRKELRQQKELESKS) and 217-238 (RKWEEKQERKKKLKEQQEKEEA). Positions 242–289 (SDEEEDKEDRDEPMDNFSEDDSGSEGEDDDEDLTGEEEQSEEDSEQEE) are enriched in acidic residues. The span at 290–306 (NAPKIKEDIYGRKRDAE) shows a compositional bias: basic and acidic residues. The MIF4G domain occupies 352–553 (LKQCKGLLNR…DILNAVKNNN (202 aa)). In terms of domain architecture, MI spans 650–764 (AERRNIFCII…QLSVLKVVDF (115 aa)).

Belongs to the CWC22 family.

The protein resides in the nucleus. It localises to the nucleolus. This is Nucleolar MIF4G domain-containing protein 1 homolog from Drosophila melanogaster (Fruit fly).